The primary structure comprises 228 residues: Superoxide dismutase [Mn], mitochondrial (228 aa).

A mitochondrion-targeting transit peptide spans 1–24 (MALRNLMTKKPFAGILTFRQQLRC). Residues H52, H100, D189, and H193 each contribute to the Mn(2+) site.

The protein belongs to the iron/manganese superoxide dismutase family. In terms of assembly, homotetramer. It depends on Mn(2+) as a cofactor.

It is found in the mitochondrion matrix. It carries out the reaction 2 superoxide + 2 H(+) = H2O2 + O2. Destroys superoxide anion radicals which are normally produced within the cells and which are toxic to biological systems. This chain is Superoxide dismutase [Mn], mitochondrial (SODA), found in Capsicum annuum (Capsicum pepper).